We begin with the raw amino-acid sequence, 78 residues long: Calcium/calmodulin-dependent protein kinase II inhibitor 1 (78 aa).

The segment at 41 to 68 (NKRPPKLGQIGRSKRVVIEDDRIDDVLK) is CAMK2 inhibitory domain.

This sequence belongs to the CAMK2N family. Interacts with CAMK2B; the presence of Ca(2+)/calmodulin increases the interaction but is not essential. Interacts with CAMK2A; this interaction requires CAMK2A activation by Ca(2+).

The protein resides in the synapse. Its subcellular location is the cell projection. It is found in the dendrite. The protein localises to the postsynaptic density. In terms of biological role, potent and specific inhibitor of CaM-kinase II (CAMK2). Plays a role in the maintenance of long-term retrieval-induced memory in response to contextual fear. Modulates blood pressure and vascular reactivity via regulation of CAMK2 activity in addition to regulation of left ventricular mass. Mediates the NLRP3 inflammasome in cardiomyocytes via acting as an inhibitor of the MAPK14/p38 and MAPK8/JNK pathways, thereby regulating ventricular remodeling and cardiac rhythm post-myocardial infarction. Negatively effects insulin sensitivity and promotes lipid formation in adipose tissues independent of CAMK2 signaling. This chain is Calcium/calmodulin-dependent protein kinase II inhibitor 1 (CAMK2N1), found in Homo sapiens (Human).